Reading from the N-terminus, the 275-residue chain is Shikimate dehydrogenase (NADP(+)) (275 aa).

Shikimate is bound by residues 15–17 (SKS) and Thr-62. Lys-66 serves as the catalytic Proton acceptor. Glu-78 is a binding site for NADP(+). Positions 87 and 102 each coordinate shikimate. Residues 127–131 (GAGGA), 151–156 (NRTPQK), and Met-215 each bind NADP(+). Tyr-217 contacts shikimate. NADP(+) is bound at residue Gly-239.

It belongs to the shikimate dehydrogenase family. In terms of assembly, homodimer.

It catalyses the reaction shikimate + NADP(+) = 3-dehydroshikimate + NADPH + H(+). Its pathway is metabolic intermediate biosynthesis; chorismate biosynthesis; chorismate from D-erythrose 4-phosphate and phosphoenolpyruvate: step 4/7. Its function is as follows. Involved in the biosynthesis of the chorismate, which leads to the biosynthesis of aromatic amino acids. Catalyzes the reversible NADPH linked reduction of 3-dehydroshikimate (DHSA) to yield shikimate (SA). The protein is Shikimate dehydrogenase (NADP(+)) of Nitrosospira multiformis (strain ATCC 25196 / NCIMB 11849 / C 71).